Reading from the N-terminus, the 202-residue chain is Adenylyl-sulfate kinase (202 aa).

35 to 42 (GLSGSGKS) provides a ligand contact to ATP. The active-site Phosphoserine intermediate is the serine 109.

The protein belongs to the APS kinase family.

The enzyme catalyses adenosine 5'-phosphosulfate + ATP = 3'-phosphoadenylyl sulfate + ADP + H(+). It functions in the pathway sulfur metabolism; hydrogen sulfide biosynthesis; sulfite from sulfate: step 2/3. In terms of biological role, catalyzes the synthesis of activated sulfate. The polypeptide is Adenylyl-sulfate kinase (Bacteroides fragilis (strain YCH46)).